The sequence spans 294 residues: MTTEVLSGKPLAAIIQQRAHEETALLDDEGVRPVLAVVVATDDESTHWYVRSIERAAGRAGIGCRIIDLGHDATEQVLASVLADLSAEPTVHGIILQTPLPAAVRADRLVGLIAPEKDIDGANPLSLGRLAVGQPAFAPATAQAVVELLDHFQIPVAGRNVAVVGRSAVVGKPLSLLLLERDATVTICHSKSGPLERYTQPADVVVVAAGRTGLLKGSHLSPETVVIDVGTNVLPDGSLVGDVDEASVTGVAAGLSPVPGGVGSVTTALLLLHTVEAARQQSRSGLLTASTSRI.

Residues 165–167, serine 190, and threonine 231 each bind NADP(+); that span reads GRS.

This sequence belongs to the tetrahydrofolate dehydrogenase/cyclohydrolase family. As to quaternary structure, homodimer.

The enzyme catalyses (6R)-5,10-methylene-5,6,7,8-tetrahydrofolate + NADP(+) = (6R)-5,10-methenyltetrahydrofolate + NADPH. The catalysed reaction is (6R)-5,10-methenyltetrahydrofolate + H2O = (6R)-10-formyltetrahydrofolate + H(+). The protein operates within one-carbon metabolism; tetrahydrofolate interconversion. Functionally, catalyzes the oxidation of 5,10-methylenetetrahydrofolate to 5,10-methenyltetrahydrofolate and then the hydrolysis of 5,10-methenyltetrahydrofolate to 10-formyltetrahydrofolate. The polypeptide is Bifunctional protein FolD 1 (Paenarthrobacter aurescens (strain TC1)).